The chain runs to 329 residues: Meiotic drive suppressor wtf21 (329 aa).

The segment at 1–68 is disordered; the sequence is MKNNYTSLKS…RENNPSRSTD (68 aa). The span at 19–30 shows a compositional bias: basic and acidic residues; that stretch reads KTDHEIDLEKGP. A run of 5 helical transmembrane segments spans residues 73-95, 110-132, 165-182, 192-214, and 290-312; these read FLIK…ICYL, WTLF…YFYE, IIIW…FVYI, ALIC…VCIP, and GIAF…IRGA.

It belongs to the WTF family. As to quaternary structure, homomer. Interacts with other proteins that exhibit high sequence similarity.

It is found in the spore membrane. It localises to the vacuole membrane. In terms of biological role, acts as a suppressor component of the dual wtf meiotic drive system, and can suppress but not confer meiotic drive by compatible poisons. Wtf meiotic drive systems promote unequal transmission of alleles from the parental zygote to progeny spores by encoding a poison and an antidote from the same locus; the poison is trans-acting and forms toxic aggregates in all spores within an ascus, wherease the antidote is spore-specific and targets aggregates for degradation by the vacuole. Meiotic drive by wtf systems therefore lead to poisoning of all progeny that do not inherit the dual poison/antidote allele, or express a compatible antidote. The protein is Meiotic drive suppressor wtf21 of Schizosaccharomyces pombe (strain 972 / ATCC 24843) (Fission yeast).